We begin with the raw amino-acid sequence, 373 residues long: tRNA-specific 2-thiouridylase MnmA (373 aa).

ATP is bound by residues 12–19 (GMSGGVDS) and methionine 38. Positions 98–100 (NPD) are interaction with target base in tRNA. The active-site Nucleophile is the cysteine 103. A disulfide bridge connects residues cysteine 103 and cysteine 200. Glycine 127 contacts ATP. An interaction with tRNA region spans residues 150-152 (KDQ). Cysteine 200 serves as the catalytic Cysteine persulfide intermediate. An interaction with tRNA region spans residues 312-313 (RY).

Belongs to the MnmA/TRMU family.

Its subcellular location is the cytoplasm. The enzyme catalyses S-sulfanyl-L-cysteinyl-[protein] + uridine(34) in tRNA + AH2 + ATP = 2-thiouridine(34) in tRNA + L-cysteinyl-[protein] + A + AMP + diphosphate + H(+). In terms of biological role, catalyzes the 2-thiolation of uridine at the wobble position (U34) of tRNA, leading to the formation of s(2)U34. The chain is tRNA-specific 2-thiouridylase MnmA from Streptococcus pneumoniae (strain JJA).